The sequence spans 347 residues: S-adenosylmethionine:tRNA ribosyltransferase-isomerase (347 aa).

This sequence belongs to the QueA family. In terms of assembly, monomer.

Its subcellular location is the cytoplasm. The enzyme catalyses 7-aminomethyl-7-carbaguanosine(34) in tRNA + S-adenosyl-L-methionine = epoxyqueuosine(34) in tRNA + adenine + L-methionine + 2 H(+). Its pathway is tRNA modification; tRNA-queuosine biosynthesis. Its function is as follows. Transfers and isomerizes the ribose moiety from AdoMet to the 7-aminomethyl group of 7-deazaguanine (preQ1-tRNA) to give epoxyqueuosine (oQ-tRNA). The sequence is that of S-adenosylmethionine:tRNA ribosyltransferase-isomerase from Methylococcus capsulatus (strain ATCC 33009 / NCIMB 11132 / Bath).